The primary structure comprises 949 residues: Inactive atromentin synthetase invA3 (949 aa).

The adenylation (A) domain stretch occupies residues 38–460 (RAVSQYPNHE…SGRIKDTVVV (423 aa)). Residues 592-670 (ALSTETEKTL…NLAKYVDSLV (79 aa)) enclose the Carrier domain. A thiolation and peptide carrier (T) domain region spans residues 597-667 (TEKTLAGIYA…VISNLAKYVD (71 aa)). O-(pantetheine 4'-phosphoryl)serine is present on Ser629. The interval 693-934 (PIFMVHPGMA…YTLMDFDHVA (242 aa)) is thioesterase (TE) domain.

This sequence belongs to the ATP-dependent AMP-binding enzyme family.

Its function is as follows. Inactive atromentin synthetase homolog. While the invA3 adenylation (A) domain is capable of adenylating 4-hydroxyphenylpyruvate (4-HPP), the invA3 enzyme is inactive because of its non-functional thioesterase (TE) domain. The polypeptide is Inactive atromentin synthetase invA3 (invA3) (Paxillus involutus (Naked brimcap)).